The chain runs to 418 residues: Synaptotagmin-15 (418 aa).

Over 1-4 the chain is Extracellular; it reads MAEQ. Residues 5–27 form a helical; Signal-anchor for type III membrane protein membrane-spanning segment; sequence LAFLIGGIIGGLLLLIGVSCCLW. The Cytoplasmic segment spans residues 28–418; sequence RRFCATFTYE…WHALCRPTEP (391 aa). 2 C2 domains span residues 144–261 and 275–396; these read CLGR…HRII and EFGD…EHWG.

This sequence belongs to the synaptotagmin family. Homodimer. In terms of tissue distribution, isoform 1 and isoform 2 are expressed in heart, lung, skeletal muscle and testis; not detected in brain, liver and kidney. Isoform 1 is expressed in spleen.

The protein resides in the membrane. In terms of biological role, may be involved in the trafficking and exocytosis of secretory vesicles in non-neuronal tissues. This Mus musculus (Mouse) protein is Synaptotagmin-15 (Syt15).